The primary structure comprises 390 residues: 3-ketoacyl-CoA thiolase (390 aa).

Residue Cys-95 is the Acyl-thioester intermediate of the active site. Catalysis depends on proton acceptor residues His-346 and Cys-376.

It belongs to the thiolase-like superfamily. Thiolase family. In terms of assembly, heterotetramer of two alpha chains (FadB) and two beta chains (FadA).

Its subcellular location is the cytoplasm. The catalysed reaction is an acyl-CoA + acetyl-CoA = a 3-oxoacyl-CoA + CoA. Its pathway is lipid metabolism; fatty acid beta-oxidation. Functionally, catalyzes the final step of fatty acid oxidation in which acetyl-CoA is released and the CoA ester of a fatty acid two carbons shorter is formed. The chain is 3-ketoacyl-CoA thiolase from Acinetobacter baylyi (strain ATCC 33305 / BD413 / ADP1).